Consider the following 397-residue polypeptide: Probable tRNA sulfurtransferase (397 aa).

The 106-residue stretch at 60–165 (HPVIEKLQEV…KEGTYITAYD (106 aa)) folds into the THUMP domain. ATP contacts are provided by residues 183–184 (ML), 208–209 (HF), Arg-265, Gly-287, and Gln-296.

Belongs to the ThiI family.

The protein resides in the cytoplasm. It carries out the reaction [ThiI sulfur-carrier protein]-S-sulfanyl-L-cysteine + a uridine in tRNA + 2 reduced [2Fe-2S]-[ferredoxin] + ATP + H(+) = [ThiI sulfur-carrier protein]-L-cysteine + a 4-thiouridine in tRNA + 2 oxidized [2Fe-2S]-[ferredoxin] + AMP + diphosphate. The enzyme catalyses [ThiS sulfur-carrier protein]-C-terminal Gly-Gly-AMP + S-sulfanyl-L-cysteinyl-[cysteine desulfurase] + AH2 = [ThiS sulfur-carrier protein]-C-terminal-Gly-aminoethanethioate + L-cysteinyl-[cysteine desulfurase] + A + AMP + 2 H(+). It participates in cofactor biosynthesis; thiamine diphosphate biosynthesis. Functionally, catalyzes the ATP-dependent transfer of a sulfur to tRNA to produce 4-thiouridine in position 8 of tRNAs, which functions as a near-UV photosensor. Also catalyzes the transfer of sulfur to the sulfur carrier protein ThiS, forming ThiS-thiocarboxylate. This is a step in the synthesis of thiazole, in the thiamine biosynthesis pathway. The sulfur is donated as persulfide by IscS. This Anoxybacillus flavithermus (strain DSM 21510 / WK1) protein is Probable tRNA sulfurtransferase.